Here is a 472-residue protein sequence, read N- to C-terminus: Ras-GEF domain-containing family member 1B (472 aa).

The N-terminal Ras-GEF domain occupies His-34 to Ala-164. A Ras-GEF domain is found at Asp-204–Pro-452.

In terms of assembly, interacts with CCDC124 during cytokinesis. Interacts with Ras family proteins.

It is found in the early endosome. The protein localises to the late endosome. Its subcellular location is the midbody. In terms of biological role, guanine nucleotide exchange factor (GEF) with specificity for RAP2A, it doesn't seems to activate other Ras family proteins (in vitro). The chain is Ras-GEF domain-containing family member 1B (RASGEF1B) from Pongo abelii (Sumatran orangutan).